A 63-amino-acid polypeptide reads, in one-letter code: UPF0434 protein Sde_1297 (63 aa).

Belongs to the UPF0434 family.

This chain is UPF0434 protein Sde_1297, found in Saccharophagus degradans (strain 2-40 / ATCC 43961 / DSM 17024).